A 419-amino-acid chain; its full sequence is Gamma-glutamyl phosphate reductase (419 aa).

Belongs to the gamma-glutamyl phosphate reductase family.

Its subcellular location is the cytoplasm. It catalyses the reaction L-glutamate 5-semialdehyde + phosphate + NADP(+) = L-glutamyl 5-phosphate + NADPH + H(+). It participates in amino-acid biosynthesis; L-proline biosynthesis; L-glutamate 5-semialdehyde from L-glutamate: step 2/2. In terms of biological role, catalyzes the NADPH-dependent reduction of L-glutamate 5-phosphate into L-glutamate 5-semialdehyde and phosphate. The product spontaneously undergoes cyclization to form 1-pyrroline-5-carboxylate. This Azobacteroides pseudotrichonymphae genomovar. CFP2 protein is Gamma-glutamyl phosphate reductase.